The primary structure comprises 63 residues: Adipokinetic prohormone type 1 (63 aa).

Positions 1-22 are cleaved as a signal peptide; sequence MVQRCLVVALLVVVVAAALCSA. A Pyrrolidone carboxylic acid modification is found at Gln-23. Residue Thr-32 is modified to Threonine amide.

This sequence belongs to the AKH/HRTH/RPCH family. As to quaternary structure, adipokinetic hormone precursor-related peptide (APRP) can form three type of disulfide-bond dimers: p1 (alpha-alpha), p2 (alpha-beta), and p3 (beta-beta).

Its subcellular location is the secreted. This hormone, released from cells in the corpora cardiaca, causes release of diglycerides from the fat body and stimulation of muscles to use these diglycerides as an energy source during energy-demanding processes. This is Adipokinetic prohormone type 1 from Schistocerca gregaria (Desert locust).